Consider the following 232-residue polypeptide: tRNA (guanine-N(1)-)-methyltransferase (232 aa).

S-adenosyl-L-methionine-binding positions include Gly108 and 128 to 133 (IGDFIM).

This sequence belongs to the RNA methyltransferase TrmD family. As to quaternary structure, homodimer.

The protein resides in the cytoplasm. The catalysed reaction is guanosine(37) in tRNA + S-adenosyl-L-methionine = N(1)-methylguanosine(37) in tRNA + S-adenosyl-L-homocysteine + H(+). Specifically methylates guanosine-37 in various tRNAs. The chain is tRNA (guanine-N(1)-)-methyltransferase from Campylobacter fetus subsp. fetus (strain 82-40).